A 208-amino-acid polypeptide reads, in one-letter code: MKQSLLLSFVLLLLSSSSLVTPIHARNKSNPAKSPVGAPAPGPSSSDCSTVIYSMMDCLGYLGVGSNETKPEKSCCTGIETVLQYNPQCICAGLVSAGEMGIELNSTRALATPKACKLSIAPPHCGIITSGATTPGASPVSPSAGAPTTSPSAAKSPETSATSPSSDETPSMTAPSPSSSGTNILSVPALTIVFVIVSSVAYISAFSN.

The signal sequence occupies residues 1–25 (MKQSLLLSFVLLLLSSSSLVTPIHA). Residues N27, N67, and N105 are each glycosylated (N-linked (GlcNAc...) asparagine). Disulfide bonds link C48-C91, C58-C75, C76-C116, and C89-C125. A disordered region spans residues 136-181 (GASPVSPSAGAPTTSPSAAKSPETSATSPSSDETPSMTAPSPSSSG). S179 is lipidated: GPI-anchor amidated serine. Positions 180–208 (SGTNILSVPALTIVFVIVSSVAYISAFSN) are cleaved as a propeptide — removed in mature form.

Belongs to the plant LTP family. In terms of tissue distribution, confined to the anthers and stamen of the inflorescence, especially in pollen.

The protein resides in the cell membrane. In terms of biological role, lipid transfer protein involved in seed and ovule maturation and development, probably by regulating the fatty acids homeostasis during suberin and sporopollenin biosynthesis or deposition. In Arabidopsis thaliana (Mouse-ear cress), this protein is Non-specific lipid transfer protein GPI-anchored 4.